Here is a 300-residue protein sequence, read N- to C-terminus: Phosphatidylserine decarboxylase proenzyme (300 aa).

Catalysis depends on charge relay system; for autoendoproteolytic cleavage activity residues Asp117, His173, and Ser260. Ser260 (schiff-base intermediate with substrate; via pyruvic acid; for decarboxylase activity) is an active-site residue. The residue at position 260 (Ser260) is a Pyruvic acid (Ser); by autocatalysis.

It belongs to the phosphatidylserine decarboxylase family. PSD-B subfamily. Prokaryotic type II sub-subfamily. In terms of assembly, heterodimer of a large membrane-associated beta subunit and a small pyruvoyl-containing alpha subunit. Pyruvate is required as a cofactor. Is synthesized initially as an inactive proenzyme. Formation of the active enzyme involves a self-maturation process in which the active site pyruvoyl group is generated from an internal serine residue via an autocatalytic post-translational modification. Two non-identical subunits are generated from the proenzyme in this reaction, and the pyruvate is formed at the N-terminus of the alpha chain, which is derived from the carboxyl end of the proenzyme. The autoendoproteolytic cleavage occurs by a canonical serine protease mechanism, in which the side chain hydroxyl group of the serine supplies its oxygen atom to form the C-terminus of the beta chain, while the remainder of the serine residue undergoes an oxidative deamination to produce ammonia and the pyruvoyl prosthetic group on the alpha chain. During this reaction, the Ser that is part of the protease active site of the proenzyme becomes the pyruvoyl prosthetic group, which constitutes an essential element of the active site of the mature decarboxylase.

The protein localises to the cell membrane. It carries out the reaction a 1,2-diacyl-sn-glycero-3-phospho-L-serine + H(+) = a 1,2-diacyl-sn-glycero-3-phosphoethanolamine + CO2. It participates in phospholipid metabolism; phosphatidylethanolamine biosynthesis; phosphatidylethanolamine from CDP-diacylglycerol: step 2/2. Catalyzes the formation of phosphatidylethanolamine (PtdEtn) from phosphatidylserine (PtdSer). This is Phosphatidylserine decarboxylase proenzyme from Fusobacterium nucleatum subsp. nucleatum (strain ATCC 25586 / DSM 15643 / BCRC 10681 / CIP 101130 / JCM 8532 / KCTC 2640 / LMG 13131 / VPI 4355).